Reading from the N-terminus, the 189-residue chain is Heme-binding protein 1 (189 aa).

This sequence belongs to the HEBP family. In terms of assembly, monomer.

The protein resides in the cytoplasm. Its function is as follows. May bind free porphyrinogens that may be present in the cell and thus facilitate removal of these potentially toxic compound. Binds with a high affinity to one molecule of heme or porphyrins. It binds metalloporphyrins, free porphyrins and N-methylprotoporphyrin with similar affinities. The sequence is that of Heme-binding protein 1 (HEBP1) from Sus scrofa (Pig).